The chain runs to 426 residues: Histidine--tRNA ligase (426 aa).

Belongs to the class-II aminoacyl-tRNA synthetase family. As to quaternary structure, homodimer.

Its subcellular location is the cytoplasm. It catalyses the reaction tRNA(His) + L-histidine + ATP = L-histidyl-tRNA(His) + AMP + diphosphate + H(+). This is Histidine--tRNA ligase from Corynebacterium kroppenstedtii (strain DSM 44385 / JCM 11950 / CIP 105744 / CCUG 35717).